The chain runs to 76 residues: Putative phosphotransferase enzyme IIA component YyzE (76 aa).

The PTS EIIA type-1 domain maps to methionine 1–serine 76. Histidine 22 acts as the Tele-phosphohistidine intermediate in catalysis.

Its subcellular location is the cytoplasm. Functionally, the phosphoenolpyruvate-dependent sugar phosphotransferase system (PTS), a major carbohydrate active -transport system, catalyzes the phosphorylation of incoming sugar substrates concomitant with their translocation across the cell membrane. This Bacillus subtilis (strain 168) protein is Putative phosphotransferase enzyme IIA component YyzE (yyzE).